The chain runs to 142 residues: Large ribosomal subunit protein uL11 (142 aa).

This sequence belongs to the universal ribosomal protein uL11 family. In terms of assembly, part of the ribosomal stalk of the 50S ribosomal subunit. Interacts with L10 and the large rRNA to form the base of the stalk. L10 forms an elongated spine to which L12 dimers bind in a sequential fashion forming a multimeric L10(L12)X complex. Post-translationally, one or more lysine residues are methylated.

Its function is as follows. Forms part of the ribosomal stalk which helps the ribosome interact with GTP-bound translation factors. The chain is Large ribosomal subunit protein uL11 from Dichelobacter nodosus (strain VCS1703A).